The primary structure comprises 311 residues: Probable porphobilinogen deaminase (311 aa).

C237 bears the S-(dipyrrolylmethanemethyl)cysteine mark. Residues 270-289 are disordered; it reads SKTGDKNNPKSLGQSAGEEL.

Belongs to the HMBS family. Requires dipyrromethane as cofactor.

It catalyses the reaction 4 porphobilinogen + H2O = hydroxymethylbilane + 4 NH4(+). The protein operates within porphyrin-containing compound metabolism; protoporphyrin-IX biosynthesis; coproporphyrinogen-III from 5-aminolevulinate: step 2/4. In terms of biological role, tetrapolymerization of the monopyrrole PBG into the hydroxymethylbilane pre-uroporphyrinogen in several discrete steps. This Nitrosopumilus maritimus (strain SCM1) protein is Probable porphobilinogen deaminase.